The following is a 501-amino-acid chain: L-arabinose isomerase (501 aa).

Mn(2+) contacts are provided by Glu-306, Glu-333, His-350, and His-450.

It belongs to the arabinose isomerase family. In terms of assembly, homohexamer. It depends on Mn(2+) as a cofactor.

It catalyses the reaction beta-L-arabinopyranose = L-ribulose. It functions in the pathway carbohydrate degradation; L-arabinose degradation via L-ribulose; D-xylulose 5-phosphate from L-arabinose (bacterial route): step 1/3. In terms of biological role, catalyzes the conversion of L-arabinose to L-ribulose. The sequence is that of L-arabinose isomerase from Pectobacterium carotovorum subsp. carotovorum (strain PC1).